A 218-amino-acid polypeptide reads, in one-letter code: Uridine kinase (218 aa).

Position 16–23 (16–23) interacts with ATP; it reads GGSGSGKT.

This sequence belongs to the uridine kinase family.

It is found in the cytoplasm. The catalysed reaction is uridine + ATP = UMP + ADP + H(+). It catalyses the reaction cytidine + ATP = CMP + ADP + H(+). It functions in the pathway pyrimidine metabolism; CTP biosynthesis via salvage pathway; CTP from cytidine: step 1/3. The protein operates within pyrimidine metabolism; UMP biosynthesis via salvage pathway; UMP from uridine: step 1/1. This Limosilactobacillus reuteri (strain DSM 20016) (Lactobacillus reuteri) protein is Uridine kinase.